The sequence spans 162 residues: Caveolin-2 (162 aa).

Residues 1-86 are Cytoplasmic-facing; it reads MGLETEKADV…FEMSKYVIYK (86 aa). Y19 is subject to Phosphotyrosine; by SRC. 2 positions are modified to phosphoserine: S20 and S23. Y27 carries the post-translational modification Phosphotyrosine; by SRC. An intramembrane region (helical) is located at residues 87–107; it reads FLTVFLAIPLAFAAGILFATL. The Cytoplasmic segment spans residues 108 to 162; that stretch reads SCLHIWIIMPFVKTCLMVLPSVQTIWKSVTDVVIAPLCTSVGRSFSSVSLQLSHD.

This sequence belongs to the caveolin family. In terms of assembly, monomer or homodimer. Interacts with CAV1; the interaction forms a stable heterooligomeric complex that is required for targeting to lipid rafts and for caveolae formation. Tyrosine phosphorylated forms do not form heterooligomers with the Tyr-19-phosphorylated form existing as a monomer or dimer, and the Tyr-27-form as a monomer only. Interacts (tyrosine phosphorylated form) with the SH2 domain-containing proteins, RASA1, NCK1 and SRC. Interacts (tyrosine phosphorylated form) with INSR, the interaction (Tyr-27-phosphorylated form) is increased on insulin stimulation. Interacts (Tyr-19 phosphorylated form) with MAPK1 (phosphorylated form); the interaction, promoted by insulin, leads to nuclear location and MAPK1 activation. Interacts with STAT3; the interaction is increased on insulin-induced tyrosine phosphorylation leading to STAT activation. Post-translationally, phosphorylated on serine and tyrosine residues. CAV1 promotes phosphorylation on Ser-23 which then targets the complex to the plasma membrane, lipid rafts and caveolae. Phosphorylation on both Tyr-19 and Tyr-27 is required for insulin-induced 'Ser-727' phosphorylation of STAT3 and its activation. Phosphorylation on Tyr-19 is required for insulin-induced phosphorylation of MAPK1 and DNA binding of STAT3. Tyrosine phosphorylation is induced by both EGF and insulin.

It localises to the nucleus. It is found in the cytoplasm. The protein localises to the golgi apparatus membrane. The protein resides in the cell membrane. Its subcellular location is the membrane. It localises to the caveola. Functionally, may act as a scaffolding protein within caveolar membranes. Interacts directly with G-protein alpha subunits and can functionally regulate their activity. Acts as an accessory protein in conjunction with CAV1 in targeting to lipid rafts and driving caveolae formation. Positive regulator of cellular mitogenesis of the MAPK signaling pathway. Required for the insulin-stimulated nuclear translocation and activation of MAPK1 and STAT3, and the subsequent regulation of cell cycle progression. The chain is Caveolin-2 (CAV2) from Muntiacus muntjak (Barking deer).